A 123-amino-acid chain; its full sequence is NADH-quinone oxidoreductase subunit A (123 aa).

Helical transmembrane passes span 11–31 (YLPI…IMIL), 68–88 (LVAI…PWAI), and 93–113 (IGKM…IGFI).

This sequence belongs to the complex I subunit 3 family. In terms of assembly, NDH-1 is composed of 14 different subunits. Subunits NuoA, H, J, K, L, M, N constitute the membrane sector of the complex.

It is found in the cell inner membrane. The enzyme catalyses a quinone + NADH + 5 H(+)(in) = a quinol + NAD(+) + 4 H(+)(out). Functionally, NDH-1 shuttles electrons from NADH, via FMN and iron-sulfur (Fe-S) centers, to quinones in the respiratory chain. The immediate electron acceptor for the enzyme in this species is believed to be ubiquinone. Couples the redox reaction to proton translocation (for every two electrons transferred, four hydrogen ions are translocated across the cytoplasmic membrane), and thus conserves the redox energy in a proton gradient. This chain is NADH-quinone oxidoreductase subunit A, found in Rickettsia prowazekii (strain Madrid E).